The primary structure comprises 171 residues: ATP synthase subunit delta (171 aa).

This sequence belongs to the ATPase delta chain family. As to quaternary structure, F-type ATPases have 2 components, F(1) - the catalytic core - and F(0) - the membrane proton channel. F(1) has five subunits: alpha(3), beta(3), gamma(1), delta(1), epsilon(1). F(0) has three main subunits: a(1), b(2) and c(10-14). The alpha and beta chains form an alternating ring which encloses part of the gamma chain. F(1) is attached to F(0) by a central stalk formed by the gamma and epsilon chains, while a peripheral stalk is formed by the delta and b chains.

The protein localises to the cell membrane. F(1)F(0) ATP synthase produces ATP from ADP in the presence of a proton or sodium gradient. F-type ATPases consist of two structural domains, F(1) containing the extramembraneous catalytic core and F(0) containing the membrane proton channel, linked together by a central stalk and a peripheral stalk. During catalysis, ATP synthesis in the catalytic domain of F(1) is coupled via a rotary mechanism of the central stalk subunits to proton translocation. Its function is as follows. This protein is part of the stalk that links CF(0) to CF(1). It either transmits conformational changes from CF(0) to CF(1) or is implicated in proton conduction. The protein is ATP synthase subunit delta of Acholeplasma laidlawii (strain PG-8A).